Consider the following 550-residue polypeptide: Zorya protein ZorA (550 aa).

3 consecutive transmembrane segments (helical) span residues 16–36, 52–72, and 92–112; these read TLIT…AWWC, LMGA…LLNF, and FITS…DAFF.

This sequence belongs to the MotA family.

Its subcellular location is the cell inner membrane. Its function is as follows. Component of antiviral defense system Zorya type II, composed of ZorA, ZorB and ZorE. Expression of Zorya type II in E.coli (strain MG1655) confers resistance to phages SECphi7 and T7. While most T7 infected Zorya-containing cells undergo abortive infection, a minority produce viable phage progeny. These eventually accumulate to a high multiplicity of infection, leading to culture collapse by 170 minutes after initial infection. ZorA and ZorB probably assemble in the cell inner membrane and exert their effect there. The sequence is that of Zorya protein ZorA from Escherichia coli (strain ATCC 8739 / DSM 1576 / NBRC 3972 / NCIMB 8545 / WDCM 00012 / Crooks).